A 346-amino-acid polypeptide reads, in one-letter code: Annexin A1 (346 aa).

Position 2 is an N-acetylalanine (Ala2). Phosphoserine; by TRPM7 is present on Ser5. Residue Gln19 forms an Isoglutamyl lysine isopeptide (Gln-Lys) (interchain with K-?) linkage. The residue at position 21 (Tyr21) is a Phosphotyrosine; by EGFR. Ser27 bears the Phosphoserine; by PKC mark. Ser34 and Ser37 each carry phosphoserine. A Phosphothreonine modification is found at Thr41. Annexin repeat units follow at residues 42–113 (FNPS…ALLK), 114–185 (TPAQ…SLAK), 197–269 (DLAD…AIVK), and 273–344 (SKPA…ALCG). An N6-acetyllysine modification is found at Lys58. Gly59, Val60, Glu62, Lys97, Leu100, Glu105, Met127, Gly129, Gly131, Thr132, and Glu134 together coordinate Ca(2+). Thr136 is subject to Phosphothreonine. Ca(2+) is bound by residues Asp171, Gly210, and Arg213. Residue Lys214 forms a Glycyl lysine isopeptide (Lys-Gly) (interchain with G-Cter in SUMO1); alternate linkage. Lys214 participates in a covalent cross-link: Glycyl lysine isopeptide (Lys-Gly) (interchain with G-Cter in SUMO2); alternate. Gly215 is a binding site for Ca(2+). Lys239 carries the N6-acetyllysine modification. Ca(2+) is bound by residues Asp253, Glu255, and Leu256. Lys257 is covalently cross-linked (Glycyl lysine isopeptide (Lys-Gly) (interchain with G-Cter in SUMO1)). 4 residues coordinate Ca(2+): Glu261, Met286, Gly288, and Gly290. The residue at position 312 (Lys312) is an N6-acetyllysine. Cys324 and Cys343 are joined by a disulfide. 3 residues coordinate Ca(2+): Leu328, Glu330, and Thr331. A Glycyl lysine isopeptide (Lys-Gly) (interchain with G-Cter in SUMO1) cross-link involves residue Lys332. A Ca(2+)-binding site is contributed by Glu336.

Belongs to the annexin family. As to quaternary structure, homodimer; non-covalently linked. Homodimer; linked by transglutamylation. Homodimers linked by transglutamylation are observed in placenta, but not in other tissues. Interacts with S100A11. Heterotetramer, formed by two molecules each of S100A11 and ANXA1. Interacts with DYSF. Interacts with EGFR. Post-translationally, phosphorylated by protein kinase C, EGFR and TRPM7. Phosphorylated in response to EGF treatment. Sumoylated. In terms of processing, proteolytically cleaved by cathepsin CTSG to release the active N-terminal peptide Ac2-26. In terms of tissue distribution, detected in resting neutrophils. Detected in peripheral blood T-cells. Detected in extracellular vesicles in blood serum from patients with inflammatory bowel disease, but not in serum from healthy donors. Detected in placenta (at protein level). Detected in liver.

Its subcellular location is the nucleus. The protein localises to the cytoplasm. It is found in the cell projection. It localises to the cilium. The protein resides in the cell membrane. Its subcellular location is the membrane. The protein localises to the endosome membrane. It is found in the basolateral cell membrane. It localises to the apical cell membrane. The protein resides in the lateral cell membrane. Its subcellular location is the secreted. The protein localises to the extracellular space. It is found in the extracellular exosome. It localises to the cytoplasmic vesicle. The protein resides in the secretory vesicle lumen. Its subcellular location is the phagocytic cup. The protein localises to the early endosome. It is found in the cytoplasmic vesicle membrane. Functionally, plays important roles in the innate immune response as effector of glucocorticoid-mediated responses and regulator of the inflammatory process. Has anti-inflammatory activity. Plays a role in glucocorticoid-mediated down-regulation of the early phase of the inflammatory response. Contributes to the adaptive immune response by enhancing signaling cascades that are triggered by T-cell activation, regulates differentiation and proliferation of activated T-cells. Promotes the differentiation of T-cells into Th1 cells and negatively regulates differentiation into Th2 cells. Has no effect on unstimulated T cells. Negatively regulates hormone exocytosis via activation of the formyl peptide receptors and reorganization of the actin cytoskeleton. Has high affinity for Ca(2+) and can bind up to eight Ca(2+) ions. Displays Ca(2+)-dependent binding to phospholipid membranes. Plays a role in the formation of phagocytic cups and phagosomes. Plays a role in phagocytosis by mediating the Ca(2+)-dependent interaction between phagosomes and the actin cytoskeleton. Functions at least in part by activating the formyl peptide receptors and downstream signaling cascades. Promotes chemotaxis of granulocytes and monocytes via activation of the formyl peptide receptors. Promotes rearrangement of the actin cytoskeleton, cell polarization and cell migration. Promotes resolution of inflammation and wound healing. Acts via neutrophil N-formyl peptide receptors to enhance the release of CXCL2. This chain is Annexin A1 (ANXA1), found in Homo sapiens (Human).